We begin with the raw amino-acid sequence, 198 residues long: Recombination protein RecR (198 aa).

Residues 57–72 (CEKCNTFTEAQICEVC) form a C4-type zinc finger. The region spanning 80-175 (TLLCVVETPA…AVTRLARGVP (96 aa)) is the Toprim domain.

The protein belongs to the RecR family.

Functionally, may play a role in DNA repair. It seems to be involved in an RecBC-independent recombinational process of DNA repair. It may act with RecF and RecO. This Burkholderia vietnamiensis (strain G4 / LMG 22486) (Burkholderia cepacia (strain R1808)) protein is Recombination protein RecR.